Here is a 122-residue protein sequence, read N- to C-terminus: Biogenesis of lysosome-related organelles complex 1 subunit CNL1 (122 aa).

Over residues 1 to 10 (MQDNSSHSRE) the composition is skewed to basic and acidic residues. Residues 1–21 (MQDNSSHSRESASAGDDPLGI) are disordered. A coiled-coil region spans residues 63–95 (ENTIDKNIAKFKELLEKCDTLENHYEMLNQLAI).

Belongs to the BLOC1S4 family. In terms of assembly, component of the biogenesis of lysosome-related organelles complex-1 (BLOC-1) composed of at least BLI1, BLS1, CNL1, KXD1, SNN1 and VAB2.

The protein localises to the cytoplasm. Component of the biogenesis of lysosome-related organelles complex-1 (BLOC-1), a complex that is involved in endosomal cargo sorting. The protein is Biogenesis of lysosome-related organelles complex 1 subunit CNL1 (CLN1) of Saccharomyces cerevisiae (strain RM11-1a) (Baker's yeast).